A 436-amino-acid chain; its full sequence is MRRDVNGVTKSRFEMFSNSDEAVINKKLPKELLLRIFSFLDVVTLCRCAQVSRAWNVLALDGSNWQRIDLFDFQRDIEGRVVENISKRCGGFLRKLSLRGCLGVGDNALRTFAQNCRNIEVLSLNGCTKTTDATCTSLSKFCSKLRHLDLASCTSITNMSLKALSEGCPLLEQLNISWCDQVTKDGIQALVRGCGGLKALFLKGCTQLEDEALKYIGAHCPELVTLNLQTCLQITDEGLITICRGCHKLQSLCASGCSNITDAILNALGQNCPRLRILEVARCSQLTDVGFTTLARNCHELEKMDLEECVQITDSTLIQLSIHCPRLQVLSLSHCELITDDGIRHLGNGACAHDQLEVIELDNCPLITDASLEHLKSCHSLERIELYDCQQITRAGIKRLRTHLPNIKVHAYFAPVTPPPSVGGSRQRFCRCCIIL.

Residues A22–I68 enclose the F-box domain. LRR repeat units follow at residues Q74–G100, C101–G126, C127–S152, C153–W178, C179–G204, C205–T230, C231–G256, C257–R282, C283–E308, C309–H334, C335–N363, C364–D388, and C389–A414. T417 bears the Phosphothreonine mark. Position 421 is a phosphoserine (S421).

As to quaternary structure, interacts with SKP1 and CUL1. In terms of tissue distribution, highly expressed in brain.

It localises to the cytoplasm. Substrate-recognition component of the SCF (SKP1-CUL1-F-box protein)-type E3 ubiquitin ligase complex. Isoform 3 regulates neural transmission by binding and ubiquitinating RIMS1, a modulator of presynaptic plasticity. In Mus musculus (Mouse), this protein is F-box/LRR-repeat protein 20 (Fbxl20).